Consider the following 306-residue polypeptide: UDP-3-O-acyl-N-acetylglucosamine deacetylase (306 aa).

The Zn(2+) site is built by H79, H238, and D242. Residue H265 is the Proton donor of the active site.

It belongs to the LpxC family. Zn(2+) serves as cofactor.

It carries out the reaction a UDP-3-O-[(3R)-3-hydroxyacyl]-N-acetyl-alpha-D-glucosamine + H2O = a UDP-3-O-[(3R)-3-hydroxyacyl]-alpha-D-glucosamine + acetate. It participates in glycolipid biosynthesis; lipid IV(A) biosynthesis; lipid IV(A) from (3R)-3-hydroxytetradecanoyl-[acyl-carrier-protein] and UDP-N-acetyl-alpha-D-glucosamine: step 2/6. Functionally, catalyzes the hydrolysis of UDP-3-O-myristoyl-N-acetylglucosamine to form UDP-3-O-myristoylglucosamine and acetate, the committed step in lipid A biosynthesis. The protein is UDP-3-O-acyl-N-acetylglucosamine deacetylase of Shewanella frigidimarina (strain NCIMB 400).